The chain runs to 166 residues: 16S rRNA aminocarboxypropyltransferase (166 aa).

5 residues coordinate S-adenosyl-L-methionine: Thr-17, Val-62, Ile-84, Tyr-99, and Ser-103.

This sequence belongs to the TDD superfamily. TSR3 family.

The protein resides in the cytoplasm. It carries out the reaction an N(1)-methylpseudouridine in rRNA + S-adenosyl-L-methionine = N(1)-methyl-N(3)-[(3S)-3-amino-3-carboxypropyl]pseudouridine in rRNA + S-methyl-5'-thioadenosine + H(+). Aminocarboxypropyltransferase that catalyzes the aminocarboxypropyl transfer on pseudouridine corresponding to position 914 in M.jannaschii 16S rRNA. It constitutes the last step in biosynthesis of the hypermodified N1-methyl-N3-(3-amino-3-carboxypropyl) pseudouridine (m1acp3-Psi). The chain is 16S rRNA aminocarboxypropyltransferase from Saccharolobus solfataricus (strain ATCC 35092 / DSM 1617 / JCM 11322 / P2) (Sulfolobus solfataricus).